The following is a 493-amino-acid chain: Envelope glycoprotein gp63 (493 aa).

The signal sequence occupies residues 1-22; it reads MGKSGLYFSLICFYTLFPSSFG. Residues 23–446 are Extracellular-facing; sequence NPSRCTLFIG…GLSQWAREAL (424 aa). 2 N-linked (GlcNAc...) asparagine; by host glycosylation sites follow: Asn140 and Asn222. The CXXC signature appears at 225-228; it reads CMVC. 3 disulfides stabilise this stretch: Cys225-Cys228, Cys225-Cys404, and Cys396-Cys403. Asn292 carries an N-linked (GlcNAc...) asparagine; by host glycan. The segment at 316–336 is fusion peptide; it reads AVPIAIWLVSALAAGTGIAGG. Coiled coils occupy residues 344–390 and 400–432; these read ASSK…LLFW and QEQC…GWGL. The tract at residues 379–395 is immunosuppression; that stretch reads AQNRRGLDLLFWEQGGL. A CX6CC motif is present at residues 396–404; that stretch reads CKAIQEQCC. Asn407 carries N-linked (GlcNAc...) asparagine; by host glycosylation. The chain crosses the membrane as a helical span at residues 447–467; it reads QTGITLLALFLLLIVVGPCVI. The S-palmitoyl cysteine; by host moiety is linked to residue Cys465. Topologically, residues 468–493 are cytoplasmic; the sequence is RQLQTLPSRLQHRSQPYSLLNYETNL.

As to quaternary structure, the mature envelope protein (Env) consists of a trimer of SU-TM heterodimers attached by a labile interchain disulfide bond. Specific enzymatic cleavages in vivo yield mature proteins. Envelope glycoproteins are synthesized as an inactive precursor that is N-glycosylated and processed likely by host cell furin or by a furin-like protease in the Golgi to yield the mature SU and TM proteins. The cleavage site between SU and TM requires the minimal sequence [KR]-X-[KR]-R. Post-translationally, the CXXC motif is highly conserved across a broad range of retroviral envelope proteins. It is thought to participate in the formation of a labile disulfide bond possibly with the CX6CC motif present in the transmembrane protein. Isomerization of the intersubunit disulfide bond to an SU intrachain disulfide bond is thought to occur upon receptor recognition in order to allow membrane fusion. In terms of processing, the transmembrane protein is palmitoylated.

It is found in the virion membrane. Its subcellular location is the host cell membrane. Its function is as follows. The surface protein (SU) attaches the virus to the host cell by binding to its receptor. This interaction triggers the refolding of the transmembrane protein (TM) and is thought to activate its fusogenic potential by unmasking its fusion peptide. Fusion occurs at the host cell plasma membrane. The transmembrane protein (TM) acts as a class I viral fusion protein. Under the current model, the protein has at least 3 conformational states: pre-fusion native state, pre-hairpin intermediate state, and post-fusion hairpin state. During viral and target cell membrane fusion, the coiled coil regions (heptad repeats) assume a trimer-of-hairpins structure, positioning the fusion peptide in close proximity to the C-terminal region of the ectodomain. The formation of this structure appears to drive apposition and subsequent fusion of viral and target cell membranes. Membranes fusion leads to delivery of the nucleocapsid into the cytoplasm. This chain is Envelope glycoprotein gp63 (env), found in Human T-cell leukemia virus 3 (strain Pyl43) (HTLV-3).